The primary structure comprises 596 residues: Zinc finger E-box-binding homeobox protein zag-1 (596 aa).

The C2H2-type 1 zinc finger occupies 24 to 46; sequence FKCPECTKAFKFKHHLKEHIRIH. The C2H2-type 2; degenerate zinc finger occupies 52–72; it reads FECQQCHKRFSHSGSYSSHMS. The segment covering 133–145 has biased composition (polar residues); sequence LENGTSPTPTQEP. Disordered regions lie at residues 133–225, 324–369, and 395–421; these read LENG…RPLR, NNSL…EPEW, and GFVT…GSSS. Residues 165–179 show a composition bias toward basic and acidic residues; sequence SEVKTEVKTEVKTED. Polar residues predominate over residues 188–200; the sequence is PAVSMSLSPAPEQ. Residues 201 to 216 are compositionally biased toward low complexity; that stretch reads NGNESMNNGGSGSDGK. The segment at residues 223–282 is a DNA-binding region (homeobox); sequence PLRSRSFLNDSQVAVLQNHFKRNPFPSKYELSAVAEQIGVNKRVVQVWFQNTRAKERRSN. The segment covering 331 to 355 has biased composition (basic and acidic residues); the sequence is QDERNNENTDEVMDHDGLKDGKETP. 2 C2H2-type zinc fingers span residues 481–503 and 509–531; these read FSCD…KYEH and YKCD…KRLH. The segment at 537 to 560 adopts a C2H2-type 5; degenerate zinc-finger fold; sequence FQCDKCLKRFSHSGSYSQHMNHRY. The disordered stretch occupies residues 569-596; sequence QPASPSDVLNGGSVTVSPSSSNTPPPST. Positions 578 to 590 are enriched in low complexity; that stretch reads NGGSVTVSPSSSN.

As to expression, expressed in the six touch receptor neurons (TRNs) but not in the FLP and PVD neurons. Expressed in the M4 cholinergic motor neuron.

The protein localises to the nucleus. Its function is as follows. Transcription factor. Down-regulates expression of genes involved in either the synthesis or reuptake of serotonin, dopamine and GABA. Acts as a transcriptional repressor to regulate multiple, discrete, neuron-specific aspects of terminal differentiation, including cell migration, axonal development and gene expression. Promotes touch receptor neuron differentiation by repressing the expression of egl-44 and egl-46. As egl-44 and egl-46, probably acting as a heterodimer, repress expression of zag-1 in FLP neurons, together these proteins form a bistable, negative-feedback loop that regulates the choice between neuronal fates. Required for axon guidance. Involved in the proper development of the pharynx. Required for pharynx isthmus peristalsis, probably via a role in the differentiation of the M4 cholinergic motor neuron. Directly represses its own transcription by interacting with conserved E-box sequence motifs 5'-CACCTG-3' in its own promoter. May also act as a transcriptional activator of the homeodomain ceh-28. This is Zinc finger E-box-binding homeobox protein zag-1 from Caenorhabditis elegans.